A 124-amino-acid polypeptide reads, in one-letter code: Small ribosomal subunit protein eS6 (124 aa).

It belongs to the eukaryotic ribosomal protein eS6 family.

The protein is Small ribosomal subunit protein eS6 of Methanococcus maripaludis (strain C6 / ATCC BAA-1332).